The following is a 493-amino-acid chain: Aerolysin (493 aa).

Residues 1–23 (MQKIKLTGLSLIISGLLMAQAQA) form the signal peptide. Disulfide bonds link Cys42–Cys98 and Cys182–Cys187. An interaction with host N-linked glycan region spans residues 68 to 84 (WQISGLANGWVIMGPGY). Positions 256 to 288 (YGLSEKVTTKNKFKWPLVGETELSIEIAANQSW) are part of the transmembrane beta-barrel after proteolytic activation of the toxin and insertion into the host membrane. An interaction with glycans from host GPI-anchor region spans residues 346–355 (RWGGNAWYTH). Residues 446–493 (AADSKVRRARSVDGAGQGLRLEIPLDAQELSGLGFNNVSLSVTPAANQ) constitute a propeptide that is removed on maturation.

It belongs to the aerolysin family. Homodimer in solution; homoheptamer in the host membrane. After binding to GPI-anchored proteins in target membranes and proteolytic removal of the C-terminal propeptide, the protein assembles into a heptameric pre-pore complex. A further conformation change leads to insertion into the host membrane. Post-translationally, proteolytic cleavage and subsequent release of the propeptide trigger a major conformation change, leading to the formation of a heptameric pre-pore that then inserts into the host membrane.

The protein resides in the secreted. The protein localises to the host cell membrane. In terms of biological role, secreted, cytolytic toxin that forms pores in host membranes after proteolytic removal of a C-terminal propeptide, leading to destruction of the membrane permeability barrier and host cell death. The pores are formed by transmembrane beta-strands and are approximately 3 nm in diameter. The chain is Aerolysin (aerA) from Aeromonas hydrophila.